Reading from the N-terminus, the 345-residue chain is NADH-ubiquinone oxidoreductase chain 2 (345 aa).

9 helical membrane-spanning segments follow: residues 25–45, 60–80, 99–119, 149–171, 178–198, 199–219, 242–262, 282–302, and 324–344; these read HWLL…PLMT, FLTQ…NAWL, TIAI…PEVL, LNTP…GGLN, ILAF…PFSP, QLMI…FLVL, ALSL…GFVP, LALS…IVTL, and LLLS…PLTL.

The protein belongs to the complex I subunit 2 family. As to quaternary structure, core subunit of respiratory chain NADH dehydrogenase (Complex I) which is composed of 45 different subunits.

Its subcellular location is the mitochondrion inner membrane. The enzyme catalyses a ubiquinone + NADH + 5 H(+)(in) = a ubiquinol + NAD(+) + 4 H(+)(out). Its function is as follows. Core subunit of the mitochondrial membrane respiratory chain NADH dehydrogenase (Complex I) which catalyzes electron transfer from NADH through the respiratory chain, using ubiquinone as an electron acceptor. Essential for the catalytic activity and assembly of complex I. This Xenopus laevis (African clawed frog) protein is NADH-ubiquinone oxidoreductase chain 2 (mt-nd2).